The following is a 390-amino-acid chain: Flagellar P-ring protein (390 aa).

Positions 1 to 25 (MLLKKIFLTGIIVLDLVFFVSYGFA) are cleaved as a signal peptide.

Belongs to the FlgI family. The basal body constitutes a major portion of the flagellar organelle and consists of four rings (L,P,S, and M) mounted on a central rod.

The protein localises to the periplasm. The protein resides in the bacterial flagellum basal body. Functionally, assembles around the rod to form the L-ring and probably protects the motor/basal body from shearing forces during rotation. This chain is Flagellar P-ring protein, found in Syntrophus aciditrophicus (strain SB).